A 574-amino-acid chain; its full sequence is Glycine--tRNA ligase (574 aa).

Arginine 96 and glutamate 162 together coordinate substrate. ATP-binding positions include arginine 194–glutamate 196, isoleucine 204–phenylalanine 209, glutamate 327–cysteine 328, and glycine 450–arginine 453. Phenylalanine 209–glutamate 213 contacts substrate. Position 446–450 (glutamate 446–glycine 450) interacts with substrate.

The protein belongs to the class-II aminoacyl-tRNA synthetase family.

The protein localises to the cytoplasm. It carries out the reaction tRNA(Gly) + glycine + ATP = glycyl-tRNA(Gly) + AMP + diphosphate. Its function is as follows. Catalyzes the attachment of glycine to tRNA(Gly). This is Glycine--tRNA ligase from Methanococcus maripaludis (strain DSM 14266 / JCM 13030 / NBRC 101832 / S2 / LL).